A 2661-amino-acid chain; its full sequence is MDPLASNFRGETVLLFGSQSLSFDANTFNAIRSSLEKEEYLRWIRHTVADLPSALNTALQHVPHLKGSEEWAFSAVQELNDWLDSGHQPNSLDPSALPNTILTPLVVILHLSQYMKYLISANDYQDDTLLSKRQQETCETLGLCTGLLSSLAVSSSRTRLQLERYGSVAIRLAMLIGLIVDARDRSTSHGPSQSTAALWHSEEQKEKLLEILAANPEAYISVYYDQNRATITIPTAQTATIRKDLASAGLTTTEIGLRGRFHWSGHEAEVDQLIKLCDIDKRFQFTQKTALVLPNRSFDSEPHVHQGPLHAMALWSILVNPPEWQKTVSAVYASTLVSTTAKVVSFGQERCVPPTILQNLDSRVFYMGDLEKTSSPRPRGDDIAIVGASIKVAGADDLEEFWEILSKGISQHKEVPPERFTFDTVYRDRDPKTKWYGNFLNDPDKFDHKFFKKSPREAESMDPQQRLLLQIAYQALEKGGYFHNAGPDQRIGCYMGVCAVDYENNLACYAPNAFTATSHLRGFIAGKVSHYFGWTGPALTIDTACSSSAVAVHLACQAILKGECTAALAGGTQILTSPLWFQNLAGASFLSKTGQCKPFDSKADGYCRGEAVGAVFLKKMSAALADGDQILGVISGTAVQQNENCTPIVVPNKPSLSDMFQSVIEKARLQPDHITVVEAHGTGTAVGDPVEYASVRDTLGGSKRTKKLFLGSAKGLVGHCESASGIISLVKVLLMIQKGMIPPQASFNTLNPATKATPADGIEISRQLTEWNAPFRAALINNYGASGSNASMVITQAPRATTTIPGGNEMERVPFWFSALNEKSLQAYAAEFLKYLKANHGQLSLPDLGFNVSRQSNRSLPRRLLFTCQSTNELQQRLEEYVKGDSKTSSSECPATRPLVLCFGGQVSTFIGLSRQVYEDVALLRGHLNSCNRRCLALGLRGIFPAIFQKGPIEDIVTLQLSLFAMQYSCAKSWIDAGAQPVAVLGHSFGELTALCVSGVLSLDDALRMIAARAQIIRDSWGSDGGSMMALEADLDVVQKLLATSNANLPENEVAVIACYNGPRSFTIAGPRRAIDALDTSRQASPEFASIKAKRLDVTNAFHSTLVEPLRNKLTEATKELNFRERGTIHLERSTETRSEKLIDNPGSYVADHMRNPVFFHHALQRLDNQFPNAIYLEAGSSSTITNMASRALGGSGGRHFQAMSITTDKGLDNLIDATMSLWNAGLNVRFWKQAFVETENYKPLLLPPYQFEKSRHWLELKEPPKPEIITMSAGGQRTDKAPDTILSFVGYQDSNKSHARFRLNTENREYQELMKAHLIVYTAPICPATVQMDIAIEGLKTLVPGIGSEVQPQIHNVDNQTPICADKSQSIWLDMKLADEPSKISWRFRFFGTSLDNDKMPSNKQADAGVTFTLGTLVVVPMEDEQTKLDLTRYDLLTGHKRCVELLHSTEAEEILQGRTIYKTFADIVDYGEQYRGLQRLIGHGNNSVGRVVRAYNPKTWFDAHLSDAYAQVVGIWLNCMTEHDAEELYVARGFEKWIRSPDIQPTSRPDSYDVLAYHKGPSRNSCLSDIFVFHPKTGQLIEAILGFQFVRIPRKGLAKLLTRLTRDETALATNAQSRAIPPPSTNTTQSSSQQTPIPKAAAPKKEKKRPGNPKLDVLPKLITILADLVGLEPEEITINSELADIGVDSLMAMEVVTEIERVFSCSVPLDDVADVTTMSQLVRVVESIVGMEGSETSNLSSDDDDENGTPSTPETDLSDASVDAVVDNAELIAYFAESLGMDASEISANVQLKELGVDSLLSMELGGELVEKFGLNLNESTVLEDMTINDLRQTAPGAAAPKVAESTITSAPQVTTSKAVPLTNGTSFNIPVETILSAFKETKAAGDSFITATGCRGYVEQVLPEQTLLCALHTLEAFEKMGSSIRTLKAGDTMTLFTPRPEYVSLIERLTEMLETQIGLIKVIGGPGLTIERTQTPYPTASSTVLMQEMRQKYPQYQNVNELIFYVGSNLDRALRGETDGIKLIFGCAQGRELVSGLYGDWIMNICYYRQMEDFLIRLIAKLPSNEPLRILEMGAGTGGTSKWLLPLLARLGCPVEYTFTDLAPSLVAGARKTFKQYASFMKFRAHDIEQEPAEDLLGTQHMVVASNAVHATVSLVESAKKLRKVLRPNGILMMLEMIEPLYWIDMIFGLFEGWWLFADGRKHALTPPARWKTDLQAAGFGRVDWSDGNLPENSINKVIIAVACEPEKPEELDRKSVVDEFVHKYTQGVDLLSPAIRVNRKSLGHAVLVTGGTGSVGAHVVAHLAQQPFVTKVICLNRRGKLDARQRQLESLAQKGLQLSDESLAKIQVYETDLSKPQLGLSPEMYLSLLESTTDIIHNAWPMSIKRQVQGFEAQFRIMRNLIEFARDISLGGGDPLGFQFISSIATVGHYPLWKQEIRVPEDRLPLDAVLPIGYGDAKYICELMLDKTLHTYPHRFRVSTVRLGQVGGSKISGYWNPVEHLSFLFKSAQTIQQLPDLHGPLSWTPVDDVAKSLVDLLFTEKPYPVYHIENPITQPWQEMIPILADALGIPRGNRLSLKDWVARVREFPEDPTDKDKNPATALVDFFEQDFERMSVGGLLLDTTKSREHSPSLRAVGPITPDLVRKFISYWRSISFVA.

An N-terminal acylcarrier protein transacylase domain (SAT) region spans residues 14–271 (LLFGSQSLSF…HWSGHEAEVD (258 aa)). The 417-residue stretch at 380–796 (GDDIAIVGAS…GSNASMVITQ (417 aa)) folds into the Ketosynthase family 3 (KS3) domain. Residues Cys-545, His-680, and His-719 each act as for beta-ketoacyl synthase activity in the active site. The malonyl-CoA:ACP transacylase (MAT) domain stretch occupies residues 901–1211 (LCFGGQVSTF…QAMSITTDKG (311 aa)). Ser-988 acts as the For acyl/malonyl transferase activity in catalysis. An N-terminal hotdog fold region spans residues 1283–1425 (PDTILSFVGY…GTLVVVPMED (143 aa)). In terms of domain architecture, PKS/mFAS DH spans 1283–1600 (PDTILSFVGY…FVRIPRKGLA (318 aa)). Residues 1288 to 1599 (SFVGYQDSNK…QFVRIPRKGL (312 aa)) are product template (PT) domain. The active-site Proton acceptor; for dehydratase activity is the His-1318. Positions 1453 to 1600 (AEEILQGRTI…FVRIPRKGLA (148 aa)) are C-terminal hotdog fold. The Proton donor; for dehydratase activity role is filled by Asp-1509. The segment at 1614 to 1656 (ATNAQSRAIPPPSTNTTQSSSQQTPIPKAAAPKKEKKRPGNPK) is disordered. Residues 1627–1643 (TNTTQSSSQQTPIPKAA) show a composition bias toward low complexity. The 78-residue stretch at 1654 to 1731 (NPKLDVLPKL…QLVRVVESIV (78 aa)) folds into the Carrier 1 domain. Ser-1691 carries the post-translational modification O-(pantetheine 4'-phosphoryl)serine. Positions 1734–1762 (EGSETSNLSSDDDDENGTPSTPETDLSDA) are disordered. The Carrier 2 domain occupies 1764–1841 (VDAVVDNAEL…DLRQTAPGAA (78 aa)). O-(pantetheine 4'-phosphoryl)serine is present on Ser-1801. Residues 1998-2231 (QYQNVNELIF…GFGRVDWSDG (234 aa)) are methyltransferase (CMeT) domain. The tract at residues 2271 to 2659 (GVDLLSPAIR…FISYWRSISF (389 aa)) is thioesterase (TE) domain.

It functions in the pathway secondary metabolite biosynthesis. Functionally, non-reducing polyketide synthase; part of the gene cluster that mediates the biosynthesis of the tropolone class of fungal maleic anhydrides. The pathway begins with the synthesis of 3-methylorcinaldehyde by the non-reducing polyketide synthase (PKS) tropA. 3-methylorcinaldehyde is the substrate for the FAD-dependent monooxygenase tropB to yield a dearomatized hydroxycyclohexadione. The 2-oxoglutarate-dependent dioxygenase tropC then performs the oxidative ring expansion to provide the first tropolone metabolite stipitaldehyde. Trop D converts stipitaldehyde into stipitacetal which is in turn converted to stipitalide by the short-chain dehydrogenase/reductase tropE. The next steps involve tropF, tropG, tropH, tropI and tropJ to form successive tropolone maleic anhydrides including stipitaldehydic, stipitatonic and stipitatic acids. In Talaromyces stipitatus (strain ATCC 10500 / CBS 375.48 / QM 6759 / NRRL 1006) (Penicillium stipitatum), this protein is 3-methylorcinaldehyde synthase tropA.